A 318-amino-acid polypeptide reads, in one-letter code: Ubiquitin-like domain-containing CTD phosphatase 1 (318 aa).

Residues Leu-3–Ser-81 form the Ubiquitin-like domain. Lys-117 is modified (N6-acetyllysine). The FCP1 homology domain occupies Pro-133 to Ile-294. Positions 143, 145, and 253 each coordinate Mg(2+).

Mg(2+) is required as a cofactor.

Its subcellular location is the nucleus. The catalysed reaction is O-phospho-L-seryl-[protein] + H2O = L-seryl-[protein] + phosphate. The enzyme catalyses O-phospho-L-threonyl-[protein] + H2O = L-threonyl-[protein] + phosphate. In terms of biological role, dephosphorylates 26S nuclear proteasomes, thereby decreasing their proteolytic activity. Recruited to the 19S regulatory particle of the 26S proteasome through its interaction with 19S component PSMD2/RPN1. Once recruited, dephosphorylates 19S component PSMC2/RPT1 which impairs PSMC2 ATPase activity and disrupts 26S proteasome assembly. Has also been reported to stimulate the proteolytic activity of the 26S proteasome. In Rattus norvegicus (Rat), this protein is Ubiquitin-like domain-containing CTD phosphatase 1 (Ublcp1).